Consider the following 338-residue polypeptide: MADLKAHIAKVASGAALSFAEAREAFGIIMSGEATPSQIGGFLMALRVRGETVDEISGAVDTMRSKMLPVTAPAEAVDIVGTGGDASGTYNVSTCAAFIVAGCGVPVAKHGNRALSSKSGAADSLVALGVNIELGPDQIAACIAEAGVGFMFAPSHHAAMRHVGPTRVELGTRTIFNLLGPLSNPAGVKRQLVGVFSAQWVEPLAHVLRQLGTEKAWVVHGDGLDEMTTAGVTRVASLEYGEVRTFEITPEEVGLQRSAAAALKGGDGEYNGKALRRVLEGERNAYRDIAVLNAGGALIVAGKAETLKDAVALASESIESGRALAALEKLVEVSNRKP.

Residues glycine 81, 84–85 (GD), threonine 89, 91–94 (NVST), 109–117 (KHGNRALSS), and alanine 121 each bind 5-phospho-alpha-D-ribose 1-diphosphate. Glycine 81 is an anthranilate binding site. A Mg(2+)-binding site is contributed by serine 93. An anthranilate-binding site is contributed by asparagine 112. Arginine 167 serves as a coordination point for anthranilate. Mg(2+) contacts are provided by aspartate 225 and glutamate 226.

This sequence belongs to the anthranilate phosphoribosyltransferase family. As to quaternary structure, homodimer. Mg(2+) is required as a cofactor.

The catalysed reaction is N-(5-phospho-beta-D-ribosyl)anthranilate + diphosphate = 5-phospho-alpha-D-ribose 1-diphosphate + anthranilate. The protein operates within amino-acid biosynthesis; L-tryptophan biosynthesis; L-tryptophan from chorismate: step 2/5. Functionally, catalyzes the transfer of the phosphoribosyl group of 5-phosphorylribose-1-pyrophosphate (PRPP) to anthranilate to yield N-(5'-phosphoribosyl)-anthranilate (PRA). The protein is Anthranilate phosphoribosyltransferase of Chelativorans sp. (strain BNC1).